Here is a 229-residue protein sequence, read N- to C-terminus: Enolase-phosphatase E1 (229 aa).

It belongs to the HAD-like hydrolase superfamily. MasA/MtnC family. As to quaternary structure, monomer. Mg(2+) serves as cofactor.

It catalyses the reaction 5-methylsulfanyl-2,3-dioxopentyl phosphate + H2O = 1,2-dihydroxy-5-(methylsulfanyl)pent-1-en-3-one + phosphate. It participates in amino-acid biosynthesis; L-methionine biosynthesis via salvage pathway; L-methionine from S-methyl-5-thio-alpha-D-ribose 1-phosphate: step 3/6. It functions in the pathway amino-acid biosynthesis; L-methionine biosynthesis via salvage pathway; L-methionine from S-methyl-5-thio-alpha-D-ribose 1-phosphate: step 4/6. In terms of biological role, bifunctional enzyme that catalyzes the enolization of 2,3-diketo-5-methylthiopentyl-1-phosphate (DK-MTP-1-P) into the intermediate 2-hydroxy-3-keto-5-methylthiopentenyl-1-phosphate (HK-MTPenyl-1-P), which is then dephosphorylated to form the acireductone 1,2-dihydroxy-3-keto-5-methylthiopentene (DHK-MTPene). The polypeptide is Enolase-phosphatase E1 (Yersinia pseudotuberculosis serotype O:1b (strain IP 31758)).